Consider the following 165-residue polypeptide: Regulator of ribonuclease activity A (165 aa).

This sequence belongs to the RraA family. In terms of assembly, homotrimer. Binds to both RNA-binding sites in the C-terminal region of Rne and to RhlB.

The protein localises to the cytoplasm. Globally modulates RNA abundance by binding to RNase E (Rne) and regulating its endonucleolytic activity. Can modulate Rne action in a substrate-dependent manner by altering the composition of the degradosome. Modulates RNA-binding and helicase activities of the degradosome. The polypeptide is Regulator of ribonuclease activity A (Actinobacillus pleuropneumoniae serotype 5b (strain L20)).